Reading from the N-terminus, the 263-residue chain is 5'-nucleotidase SurE (263 aa).

A divalent metal cation-binding residues include Asp15, Asp16, Ser46, and Asn102.

Belongs to the SurE nucleotidase family. Requires a divalent metal cation as cofactor.

The protein localises to the cytoplasm. It catalyses the reaction a ribonucleoside 5'-phosphate + H2O = a ribonucleoside + phosphate. Functionally, nucleotidase that shows phosphatase activity on nucleoside 5'-monophosphates. The sequence is that of 5'-nucleotidase SurE from Chlorobaculum tepidum (strain ATCC 49652 / DSM 12025 / NBRC 103806 / TLS) (Chlorobium tepidum).